The sequence spans 301 residues: Aspartate carbamoyltransferase catalytic subunit (301 aa).

Positions 46 and 47 each coordinate carbamoyl phosphate. Lys-74 contacts L-aspartate. Arg-96, His-124, and Gln-127 together coordinate carbamoyl phosphate. Residues Arg-157 and Arg-208 each coordinate L-aspartate. Residues Ala-249 and Pro-250 each contribute to the carbamoyl phosphate site.

This sequence belongs to the aspartate/ornithine carbamoyltransferase superfamily. ATCase family. As to quaternary structure, heterododecamer (2C3:3R2) of six catalytic PyrB chains organized as two trimers (C3), and six regulatory PyrI chains organized as three dimers (R2).

The catalysed reaction is carbamoyl phosphate + L-aspartate = N-carbamoyl-L-aspartate + phosphate + H(+). Its pathway is pyrimidine metabolism; UMP biosynthesis via de novo pathway; (S)-dihydroorotate from bicarbonate: step 2/3. In terms of biological role, catalyzes the condensation of carbamoyl phosphate and aspartate to form carbamoyl aspartate and inorganic phosphate, the committed step in the de novo pyrimidine nucleotide biosynthesis pathway. The protein is Aspartate carbamoyltransferase catalytic subunit of Bacillus cereus (strain ATCC 14579 / DSM 31 / CCUG 7414 / JCM 2152 / NBRC 15305 / NCIMB 9373 / NCTC 2599 / NRRL B-3711).